Reading from the N-terminus, the 244-residue chain is Probable 2-phosphosulfolactate phosphatase (244 aa).

The protein belongs to the ComB family. Requires Mg(2+) as cofactor.

The catalysed reaction is (2R)-O-phospho-3-sulfolactate + H2O = (2R)-3-sulfolactate + phosphate. In Thermosynechococcus vestitus (strain NIES-2133 / IAM M-273 / BP-1), this protein is Probable 2-phosphosulfolactate phosphatase.